A 325-amino-acid chain; its full sequence is tRNA pseudouridine synthase B (325 aa).

The active-site Nucleophile is Asp49.

Belongs to the pseudouridine synthase TruB family. Type 1 subfamily.

It catalyses the reaction uridine(55) in tRNA = pseudouridine(55) in tRNA. In terms of biological role, responsible for synthesis of pseudouridine from uracil-55 in the psi GC loop of transfer RNAs. The protein is tRNA pseudouridine synthase B of Mesorhizobium japonicum (strain LMG 29417 / CECT 9101 / MAFF 303099) (Mesorhizobium loti (strain MAFF 303099)).